The following is a 275-amino-acid chain: 3-methyl-2-oxobutanoate hydroxymethyltransferase (275 aa).

The Mg(2+) site is built by Asp-49 and Asp-88. Residues 49 to 50 (DS), Asp-88, and Lys-118 each bind 3-methyl-2-oxobutanoate. Glu-120 serves as a coordination point for Mg(2+). The Proton acceptor role is filled by Glu-187.

This sequence belongs to the PanB family. Homodecamer; pentamer of dimers. The cofactor is Mg(2+).

It is found in the cytoplasm. It catalyses the reaction 3-methyl-2-oxobutanoate + (6R)-5,10-methylene-5,6,7,8-tetrahydrofolate + H2O = 2-dehydropantoate + (6S)-5,6,7,8-tetrahydrofolate. It functions in the pathway cofactor biosynthesis; (R)-pantothenate biosynthesis; (R)-pantoate from 3-methyl-2-oxobutanoate: step 1/2. Catalyzes the reversible reaction in which hydroxymethyl group from 5,10-methylenetetrahydrofolate is transferred onto alpha-ketoisovalerate to form ketopantoate. In Bordetella petrii (strain ATCC BAA-461 / DSM 12804 / CCUG 43448), this protein is 3-methyl-2-oxobutanoate hydroxymethyltransferase.